Reading from the N-terminus, the 103-residue chain is Large ribosomal subunit protein bL21 (103 aa).

Belongs to the bacterial ribosomal protein bL21 family. Part of the 50S ribosomal subunit. Contacts protein L20.

This protein binds to 23S rRNA in the presence of protein L20. This chain is Large ribosomal subunit protein bL21, found in Desulforudis audaxviator (strain MP104C).